Reading from the N-terminus, the 326-residue chain is Delta-aminolevulinic acid dehydratase (326 aa).

3 residues coordinate Zn(2+): Cys-125, Cys-127, and Cys-135. Lys-200 (schiff-base intermediate with substrate) is an active-site residue. The 5-aminolevulinate site is built by Arg-210 and Arg-222. Mg(2+) is bound at residue Glu-238. Catalysis depends on Lys-253, which acts as the Schiff-base intermediate with substrate. 5-aminolevulinate is bound at residue Ser-279.

The protein belongs to the ALAD family. As to quaternary structure, homooctamer. Requires Zn(2+) as cofactor.

The catalysed reaction is 2 5-aminolevulinate = porphobilinogen + 2 H2O + H(+). Its pathway is porphyrin-containing compound metabolism; protoporphyrin-IX biosynthesis; coproporphyrinogen-III from 5-aminolevulinate: step 1/4. In terms of biological role, catalyzes an early step in the biosynthesis of tetrapyrroles. Binds two molecules of 5-aminolevulinate per subunit, each at a distinct site, and catalyzes their condensation to form porphobilinogen. The protein is Delta-aminolevulinic acid dehydratase (hemB) of Methanothermobacter thermautotrophicus (strain ATCC 29096 / DSM 1053 / JCM 10044 / NBRC 100330 / Delta H) (Methanobacterium thermoautotrophicum).